Here is a 490-residue protein sequence, read N- to C-terminus: Protein nucleotidyltransferase YdiU (490 aa).

Residues glycine 94, glycine 96, arginine 97, lysine 117, aspartate 129, glycine 130, arginine 180, and arginine 187 each coordinate ATP. Aspartate 256 serves as the catalytic Proton acceptor. Mg(2+) contacts are provided by asparagine 257 and aspartate 266. Aspartate 266 is a binding site for ATP.

It belongs to the SELO family. It depends on Mg(2+) as a cofactor. Mn(2+) serves as cofactor.

It carries out the reaction L-seryl-[protein] + ATP = 3-O-(5'-adenylyl)-L-seryl-[protein] + diphosphate. The enzyme catalyses L-threonyl-[protein] + ATP = 3-O-(5'-adenylyl)-L-threonyl-[protein] + diphosphate. It catalyses the reaction L-tyrosyl-[protein] + ATP = O-(5'-adenylyl)-L-tyrosyl-[protein] + diphosphate. The catalysed reaction is L-histidyl-[protein] + UTP = N(tele)-(5'-uridylyl)-L-histidyl-[protein] + diphosphate. It carries out the reaction L-seryl-[protein] + UTP = O-(5'-uridylyl)-L-seryl-[protein] + diphosphate. The enzyme catalyses L-tyrosyl-[protein] + UTP = O-(5'-uridylyl)-L-tyrosyl-[protein] + diphosphate. Nucleotidyltransferase involved in the post-translational modification of proteins. It can catalyze the addition of adenosine monophosphate (AMP) or uridine monophosphate (UMP) to a protein, resulting in modifications known as AMPylation and UMPylation. The sequence is that of Protein nucleotidyltransferase YdiU from Clostridium perfringens (strain SM101 / Type A).